A 134-amino-acid polypeptide reads, in one-letter code: Transmembrane protein 100 (134 aa).

Transmembrane regions (helical) follow at residues 56-76 (CIIPFAVVVFIAGIVVTAVAY) and 84-104 (IISIFGLVVLSSGLFLLASSA). Serine 121 is subject to Phosphoserine.

Interacts (via C-terminus) with TRPA1 and TRPV1. Interacts with TASOR. In terms of tissue distribution, expressed in neurons of the myenteric and submucosal plexuses in the gastric body, jejunum and proximal colon. Expressed in arterial endothelial cells and neurons of the central nervous system and peripheral nervous system. Expressed in umbilical artery endothelial cells (at protein level).

It localises to the cell membrane. Its subcellular location is the membrane. The protein resides in the perikaryon. The protein localises to the cytoplasm. It is found in the perinuclear region. It localises to the endoplasmic reticulum. In terms of biological role, plays a role during embryonic arterial endothelium differentiation and vascular morphogenesis through the ACVRL1 receptor-dependent signaling pathway upon stimulation by bone morphogenetic proteins, such as GDF2/BMP9 and BMP10. Involved in the regulation of nociception, acting as a modulator of the interaction between TRPA1 and TRPV1, two molecular sensors and mediators of pain signals in dorsal root ganglia (DRG) neurons. Mechanistically, it weakens their interaction, thereby releasing the inhibition of TRPA1 by TRPV1 and increasing the single-channel open probability of the TRPA1-TRPV1 complex. The protein is Transmembrane protein 100 (TMEM100) of Homo sapiens (Human).